The chain runs to 126 residues: MAIVGLGTDIAEIERVEKALARSGVAFAERILSVQEMETFVSLKQQGRFLAKRFAAKEAASKALGTGIAHGVSFQDFTIKNDDNGKPYLQLAGRAAELAHQMGVCHTHLSLSDERHYAVATVIFES.

Residues Asp9 and Glu58 each coordinate Mg(2+).

It belongs to the P-Pant transferase superfamily. AcpS family. Mg(2+) serves as cofactor.

The protein resides in the cytoplasm. The enzyme catalyses apo-[ACP] + CoA = holo-[ACP] + adenosine 3',5'-bisphosphate + H(+). In terms of biological role, transfers the 4'-phosphopantetheine moiety from coenzyme A to a Ser of acyl-carrier-protein. The protein is Holo-[acyl-carrier-protein] synthase of Vibrio vulnificus (strain YJ016).